We begin with the raw amino-acid sequence, 444 residues long: Pre-mRNA-splicing factor cwc25 (444 aa).

Disordered stretches follow at residues 1 to 27 (MGSGDLNMKKSWHPQRSGNVAATQKAE), 168 to 385 (LASM…TDLD), and 397 to 425 (EAERAEREADEKARQQNKKFRGGDAGFMS). The stretch at 19-65 (NVAATQKAEAEAIAERKKLQQRLQEIEEERRKEEIQKALEAAGGKRK) forms a coiled coil. Residues 186–199 (QRRHKHRSHHHRSD) are compositionally biased toward basic residues. 2 stretches are compositionally biased toward basic and acidic residues: residues 200–220 (RHRDRDDDRDRDSARDRDRDR) and 228–281 (DSRD…DDRS). Over residues 282–293 (RRHRFPQGRSRS) the composition is skewed to basic residues. Composition is skewed to basic and acidic residues over residues 305–344 (RREYSRERDSGGPSSRRDDRNSRDQNRPRRDYAKEDEQPK), 360–372 (DGDHKNAEEERAK), and 397–410 (EAERAEREADEKAR). Positions 364–417 (KNAEEERAKKLAAMQAAATDLDKAREERLKALAEAERAEREADEKARQQNKKFR) form a coiled coil.

This sequence belongs to the CWC25 family. In terms of assembly, associated with the spliceosome.

Its subcellular location is the nucleus. Functionally, involved in pre-mRNA splicing. The chain is Pre-mRNA-splicing factor cwc25 (msp-6) from Neurospora crassa (strain ATCC 24698 / 74-OR23-1A / CBS 708.71 / DSM 1257 / FGSC 987).